A 134-amino-acid polypeptide reads, in one-letter code: MQAMLPVILILLLPCIPLASTATRATPEQLRKCKFQQPWSFLDCYHEKSDFPTYWIVIVGIINILSCTFFSITIYPTFNFGWNSPNALGYPQEPDEHIPLQHIQQPLALVQYENEPQPSLPPAISYFNLTGGDD.

Residues 1-21 form the signal peptide; it reads MQAMLPVILILLLPCIPLAST. The chain crosses the membrane as a helical span at residues 54-78; sequence YWIVIVGIINILSCTFFSITIYPTF.

Belongs to the adenoviridae E3_14 family. Post-translationally, phosphorylated on serine; O-glycosylated, but not N-glycosylated.

It is found in the host membrane. In terms of biological role, down-regulates the EGF receptor and prevents cytolysis by TNF. In Homo sapiens (Human), this protein is Early E3B 14.5 kDa protein.